A 142-amino-acid polypeptide reads, in one-letter code: Transcription antitermination protein NusB (142 aa).

The protein belongs to the NusB family.

Its function is as follows. Involved in transcription antitermination. Required for transcription of ribosomal RNA (rRNA) genes. Binds specifically to the boxA antiterminator sequence of the ribosomal RNA (rrn) operons. The protein is Transcription antitermination protein NusB of Roseiflexus sp. (strain RS-1).